Consider the following 445-residue polypeptide: Adenylosuccinate synthetase (445 aa).

Residues 24–30 and 52–54 contribute to the GTP site; these read GDEGKGK and GHT. Asp-25 acts as the Proton acceptor in catalysis. 2 residues coordinate Mg(2+): Asp-25 and Gly-52. IMP contacts are provided by residues 25 to 28, 50 to 53, Thr-147, Arg-161, Asn-238, Thr-253, and Arg-317; these read DEGK and NAGH. His-53 acts as the Proton donor in catalysis. 313 to 319 serves as a coordination point for substrate; sequence TTTGRRR. Residues Arg-319, 345–347, and 427–429 contribute to the GTP site; these read KLD and GVG.

It belongs to the adenylosuccinate synthetase family. As to quaternary structure, homodimer. Mg(2+) is required as a cofactor.

Its subcellular location is the cytoplasm. The enzyme catalyses IMP + L-aspartate + GTP = N(6)-(1,2-dicarboxyethyl)-AMP + GDP + phosphate + 2 H(+). The protein operates within purine metabolism; AMP biosynthesis via de novo pathway; AMP from IMP: step 1/2. Functionally, plays an important role in the de novo pathway and in the salvage pathway of purine nucleotide biosynthesis. Catalyzes the first committed step in the biosynthesis of AMP from IMP. The protein is Adenylosuccinate synthetase of Malassezia globosa (strain ATCC MYA-4612 / CBS 7966) (Dandruff-associated fungus).